Consider the following 116-residue polypeptide: MSKKRKRKYVLIVFVNTHHFMLHLGTGTLGGSGGSNVYRAIVKVDFFSFDGAGFCIIGILRGTNGLCPSNNFLGSICRSIFSIVAQMQVVPIQHEVFWSSSQRLYGSAPSLDSLFL.

A run of 2 helical transmembrane segments spans residues 40–60 (AIVKVDFFSFDGAGFCIIGIL) and 72–92 (FLGSICRSIFSIVAQMQVVPI).

The protein resides in the membrane. This is an uncharacterized protein from Saccharomyces cerevisiae (strain ATCC 204508 / S288c) (Baker's yeast).